An 87-amino-acid chain; its full sequence is UPF0473 protein PTH_1066 (87 aa).

The protein belongs to the UPF0473 family.

This Pelotomaculum thermopropionicum (strain DSM 13744 / JCM 10971 / SI) protein is UPF0473 protein PTH_1066.